A 508-amino-acid chain; its full sequence is GMP synthase [glutamine-hydrolyzing] (508 aa).

Residues methionine 1–threonine 189 enclose the Glutamine amidotransferase type-1 domain. Residue cysteine 78 is the Nucleophile of the active site. Catalysis depends on residues histidine 163 and glutamate 165. The GMPS ATP-PPase domain maps to tryptophan 190–arginine 383. Serine 217–threonine 223 contacts ATP.

As to quaternary structure, homodimer.

It carries out the reaction XMP + L-glutamine + ATP + H2O = GMP + L-glutamate + AMP + diphosphate + 2 H(+). Its pathway is purine metabolism; GMP biosynthesis; GMP from XMP (L-Gln route): step 1/1. Catalyzes the synthesis of GMP from XMP. This chain is GMP synthase [glutamine-hydrolyzing] (guaA), found in Helicobacter pylori (strain J99 / ATCC 700824) (Campylobacter pylori J99).